A 162-amino-acid chain; its full sequence is Ribonuclease P protein component (162 aa).

The interval 1-63 (MDEKDLATQP…PPAAGGKLLS (63 aa)) is disordered. The span at 21–38 (GPHEDPRRQEGVEAEKAE) shows a compositional bias: basic and acidic residues.

It belongs to the RnpA family. In terms of assembly, consists of a catalytic RNA component (M1 or rnpB) and a protein subunit.

It catalyses the reaction Endonucleolytic cleavage of RNA, removing 5'-extranucleotides from tRNA precursor.. RNaseP catalyzes the removal of the 5'-leader sequence from pre-tRNA to produce the mature 5'-terminus. It can also cleave other RNA substrates such as 4.5S RNA. The protein component plays an auxiliary but essential role in vivo by binding to the 5'-leader sequence and broadening the substrate specificity of the ribozyme. In Thermus scotoductus, this protein is Ribonuclease P protein component.